Reading from the N-terminus, the 470-residue chain is Putative ankyrin repeat protein L279 (470 aa).

ANK repeat units lie at residues 119–148, 149–178, 372–401, and 403–431; these read RDDY…NPGT, NKYA…GSDK, ETQG…NVNE, and NGKP…DISL.

This Acanthamoeba polyphaga (Amoeba) protein is Putative ankyrin repeat protein L279.